The following is a 199-amino-acid chain: Photosystem I reaction center subunit XI (199 aa).

Helical transmembrane passes span valine 108–leucine 128 and phenylalanine 165–leucine 185.

It belongs to the PsaL family.

It is found in the cellular thylakoid membrane. This chain is Photosystem I reaction center subunit XI, found in Prochlorococcus marinus (strain MIT 9215).